The primary structure comprises 203 residues: Peptidyl-tRNA hydrolase (203 aa).

TRNA is bound at residue Tyr18. The Proton acceptor role is filled by His23. TRNA contacts are provided by Phe69, Asn71, and Asn117.

Belongs to the PTH family. In terms of assembly, monomer.

The protein resides in the cytoplasm. The enzyme catalyses an N-acyl-L-alpha-aminoacyl-tRNA + H2O = an N-acyl-L-amino acid + a tRNA + H(+). Functionally, hydrolyzes ribosome-free peptidyl-tRNAs (with 1 or more amino acids incorporated), which drop off the ribosome during protein synthesis, or as a result of ribosome stalling. Catalyzes the release of premature peptidyl moieties from peptidyl-tRNA molecules trapped in stalled 50S ribosomal subunits, and thus maintains levels of free tRNAs and 50S ribosomes. The sequence is that of Peptidyl-tRNA hydrolase from Prochlorococcus marinus subsp. pastoris (strain CCMP1986 / NIES-2087 / MED4).